Consider the following 233-residue polypeptide: Large ribosomal subunit protein uL1 (233 aa).

The protein belongs to the universal ribosomal protein uL1 family. In terms of assembly, part of the 50S ribosomal subunit.

Its function is as follows. Binds directly to 23S rRNA. The L1 stalk is quite mobile in the ribosome, and is involved in E site tRNA release. Functionally, protein L1 is also a translational repressor protein, it controls the translation of the L11 operon by binding to its mRNA. The protein is Large ribosomal subunit protein uL1 of Thermotoga sp. (strain RQ2).